The chain runs to 723 residues: Polyribonucleotide nucleotidyltransferase (723 aa).

Aspartate 488 and aspartate 494 together coordinate Mg(2+). Positions proline 555–isoleucine 614 constitute a KH domain. An S1 motif domain is found at glycine 624 to lysine 692. The disordered stretch occupies residues serine 701 to glutamine 723. Residues alanine 707–glutamine 723 are compositionally biased toward low complexity.

This sequence belongs to the polyribonucleotide nucleotidyltransferase family. It depends on Mg(2+) as a cofactor.

It localises to the cytoplasm. It catalyses the reaction RNA(n+1) + phosphate = RNA(n) + a ribonucleoside 5'-diphosphate. Functionally, involved in mRNA degradation. Catalyzes the phosphorolysis of single-stranded polyribonucleotides processively in the 3'- to 5'-direction. This is Polyribonucleotide nucleotidyltransferase from Cupriavidus necator (strain ATCC 17699 / DSM 428 / KCTC 22496 / NCIMB 10442 / H16 / Stanier 337) (Ralstonia eutropha).